The primary structure comprises 313 residues: GTP cyclohydrolase MptA (313 aa).

It belongs to the GTP cyclohydrolase IV family. Homodimer. Fe(2+) is required as a cofactor.

It carries out the reaction GTP + H2O = 7,8-dihydroneopterin 2',3'-cyclic phosphate + formate + diphosphate + H(+). The protein operates within cofactor biosynthesis; 5,6,7,8-tetrahydromethanopterin biosynthesis. Its activity is regulated as follows. Inhibited by GTP concentrations greater than 0.3 mM and by 2-amino-5-formylamino-6-ribofuranosylamino-4(3H)-pyrimidinone 5'-phosphate (fapyGMP). Partial inhibition is observed when 2 mM GMP, dGTP, or 7-methyl-GTP was included along with 2 mM GTP. Functionally, converts GTP to 7,8-dihydro-D-neopterin 2',3'-cyclic phosphate, the first intermediate in the biosynthesis of coenzyme methanopterin. It is also able to utilize a variety of GTP analogs as substrates, including GDP, beta,gamma-methylene-GTP and GTP-[gamma-thio]. The sequence is that of GTP cyclohydrolase MptA (mptA) from Methanocaldococcus jannaschii (strain ATCC 43067 / DSM 2661 / JAL-1 / JCM 10045 / NBRC 100440) (Methanococcus jannaschii).